Here is a 494-residue protein sequence, read N- to C-terminus: Trigger factor (494 aa).

The region spanning 169 to 254 is the PPIase FKBP-type domain; that stretch reads GDRITMDYVG…VKEVAAPADV (86 aa). Residues 441 to 494 form a disordered region; sequence LAEEEGEAKAETKKAAPKKKAAAKAEAADAGEGEEAAPKKKAAPKKKAADESAE.

This sequence belongs to the FKBP-type PPIase family. Tig subfamily.

Its subcellular location is the cytoplasm. The catalysed reaction is [protein]-peptidylproline (omega=180) = [protein]-peptidylproline (omega=0). Functionally, involved in protein export. Acts as a chaperone by maintaining the newly synthesized protein in an open conformation. Functions as a peptidyl-prolyl cis-trans isomerase. The chain is Trigger factor from Rhizobium johnstonii (strain DSM 114642 / LMG 32736 / 3841) (Rhizobium leguminosarum bv. viciae).